A 203-amino-acid chain; its full sequence is Holliday junction branch migration complex subunit RuvA (203 aa).

A domain I region spans residues 1–64 (MIGRLRGIVL…EDAQLLFGFN (64 aa)). The tract at residues 65–142 (NKQERTLFRE…KGLHGDLFTP (78 aa)) is domain II. The tract at residues 143–154 (AADLVLTSPASP) is flexible linker. A domain III region spans residues 155 to 203 (AVDDAEAEAVAALVSLGYKPQEASRMVSKVAQADASSETLIREALRAAL).

It belongs to the RuvA family. In terms of assembly, homotetramer. Forms an RuvA(8)-RuvB(12)-Holliday junction (HJ) complex. HJ DNA is sandwiched between 2 RuvA tetramers; dsDNA enters through RuvA and exits via RuvB. An RuvB hexamer assembles on each DNA strand where it exits the tetramer. Each RuvB hexamer is contacted by two RuvA subunits (via domain III) on 2 adjacent RuvB subunits; this complex drives branch migration. In the full resolvosome a probable DNA-RuvA(4)-RuvB(12)-RuvC(2) complex forms which resolves the HJ.

The protein localises to the cytoplasm. Functionally, the RuvA-RuvB-RuvC complex processes Holliday junction (HJ) DNA during genetic recombination and DNA repair, while the RuvA-RuvB complex plays an important role in the rescue of blocked DNA replication forks via replication fork reversal (RFR). RuvA specifically binds to HJ cruciform DNA, conferring on it an open structure. The RuvB hexamer acts as an ATP-dependent pump, pulling dsDNA into and through the RuvAB complex. HJ branch migration allows RuvC to scan DNA until it finds its consensus sequence, where it cleaves and resolves the cruciform DNA. The polypeptide is Holliday junction branch migration complex subunit RuvA (Cronobacter sakazakii (strain ATCC BAA-894) (Enterobacter sakazakii)).